We begin with the raw amino-acid sequence, 363 residues long: tRNA N6-adenosine threonylcarbamoyltransferase (363 aa).

Residues H117 and H121 each coordinate Fe cation. Substrate contacts are provided by residues 139-143, D172, G185, and N287; that span reads LVSGG. Fe cation is bound at residue D315.

Belongs to the KAE1 / TsaD family. Requires Fe(2+) as cofactor.

The protein localises to the cytoplasm. It carries out the reaction L-threonylcarbamoyladenylate + adenosine(37) in tRNA = N(6)-L-threonylcarbamoyladenosine(37) in tRNA + AMP + H(+). Its function is as follows. Required for the formation of a threonylcarbamoyl group on adenosine at position 37 (t(6)A37) in tRNAs that read codons beginning with adenine. Is involved in the transfer of the threonylcarbamoyl moiety of threonylcarbamoyl-AMP (TC-AMP) to the N6 group of A37, together with TsaE and TsaB. TsaD likely plays a direct catalytic role in this reaction. This is tRNA N6-adenosine threonylcarbamoyltransferase from Cereibacter sphaeroides (strain ATCC 17025 / ATH 2.4.3) (Rhodobacter sphaeroides).